Consider the following 118-residue polypeptide: UPF0102 protein ROP_66030 (118 aa).

The protein belongs to the UPF0102 family.

In Rhodococcus opacus (strain B4), this protein is UPF0102 protein ROP_66030.